The sequence spans 485 residues: Glutamyl-tRNA(Gln) amidotransferase subunit A (485 aa).

Catalysis depends on charge relay system residues Lys74 and Ser149. The active-site Acyl-ester intermediate is the Ser173.

Belongs to the amidase family. GatA subfamily. Heterotrimer of A, B and C subunits.

It carries out the reaction L-glutamyl-tRNA(Gln) + L-glutamine + ATP + H2O = L-glutaminyl-tRNA(Gln) + L-glutamate + ADP + phosphate + H(+). Allows the formation of correctly charged Gln-tRNA(Gln) through the transamidation of misacylated Glu-tRNA(Gln) in organisms which lack glutaminyl-tRNA synthetase. The reaction takes place in the presence of glutamine and ATP through an activated gamma-phospho-Glu-tRNA(Gln). The polypeptide is Glutamyl-tRNA(Gln) amidotransferase subunit A (Herminiimonas arsenicoxydans).